Here is a 977-residue protein sequence, read N- to C-terminus: MWRTKAAAACVICRSLAHSNYGIKRKSPLQNLHLVSRSIHHPYHPSLKFQRRPLRISLQQFSSLNRLPLRKTKLLNVKYGYQSYRNFWLARLASRLLKIRYLILGSAVGGGYTAKKTYDQWEDMMPDLDEYKWIIPDFIWELDEHIDLEKLIKALPDADDLAKLLPDFEKIGESFTSLKGIFSPGYNLVSEVIGASDLLLLLGTPGETAFRATDQGYDSDKQYKKVSDKEKIDQLQEELLRTQLKYQRMLERLEKENKELRKLVLQRDDKGIHQRKLKKSLIDMYSEVLDILSDYDASYNTQDHLPRVVVVGDQSAGKTSVLEMIAQARIFPRGSGEMMTRSPVKVTLSEGPHHVALFKDSSREFDLTKEEDLAALRNEIEIRMRNSVKEGCTVSTETISLSVRGPGLQRMVLVDLPGVISTVTSGMAPDTKETIFSISKAYMQNPNAIILCIQDGSVDAERSIVTDLVSQMDPQGKRTIFVLTKVDLAEKNVASPSRIQQIIEGKLFPMKALGYFAVVTGKGNSSESIESIKEYEEEFFQNSKLLKTSMLKAHQVTTKNLSLAVSDCFWKMVRESVEQQADAFKATRFNLETEWKNNYPRLRELDRNELFEKAKNEILDEVISLTQVTPKHWEEILQKTLWERVSTHVIENIYLPAAQTMNSGTFNTTVDIKLKQWTDKQLPNKAVEVAWETLQEEFSRFMTEQKGKEHDDIFDKLKQAVKEESIKRHKWNERAEDSLRVIQHNALEDRSISDKQQWDAAIHFMEETLQSRLKDTESVIEDMVGPDWKKRWLYWISRTKEQNIRNETKNELEKLIKCNEEHAAYLANDEVTTVRKNLEARGITVDPCLIKDTWHQIYRRYFLKTALNHCNLCRRGFYYYQRHFVDSELECNDIVLFWRIQRMLAITANTLRQQLTNTEVRRLEKNVKEVLEDFAEDNEKKVKLLTGKRVQLAEDLKKVREIQEKLEAFIEALHQEK.

Residues 1 to 86 (MWRTKAAAAC…VKYGYQSYRN (86 aa)) constitute a mitochondrion transit peptide. Residues 87 to 95 (FWLARLASR) are Mitochondrial matrix-facing. Residues 96 to 112 (LLKIRYLILGSAVGGGY) form a helical membrane-spanning segment. Residues 113–787 (TAKKTYDQWE…SVIEDMVGPD (675 aa)) lie on the Mitochondrial intermembrane side of the membrane. Positions 224–271 (KKVSDKEKIDQLQEELLRTQLKYQRMLERLEKENKELRKLVLQRDDKG) form a coiled coil. The region spanning 302 to 578 (QDHLPRVVVV…FWKMVRESVE (277 aa)) is the Dynamin-type G domain. Residues 312-319 (GDQSAGKT) are G1 motif. 6 residues coordinate GTP: Ser315, Gly317, Lys318, Thr319, Ser320, and Gly334. Thr319 provides a ligand contact to Mg(2+). Positions 338-341 (MMTR) are G2 motif. 2 residues coordinate Mg(2+): Thr340 and Asp415. Residues 415-418 (DLPG) form a G3 motif region. The segment at 484 to 487 (TKVD) is G4 motif. Lys485, Asp487, and Thr520 together coordinate GTP. Residues 518–521 (VVTG) form a G5 motif region. Stalk region stretches follow at residues 606-853 (DRNE…IKDT) and 891-945 (CNDI…VKLL). Residues 753–873 (SDKQQWDAAI…KTALNHCNLC (121 aa)) are paddle region. Residues 788–798 (WKKRWLYWISR) lie within the membrane without spanning it. Over 799 to 977 (TKEQNIRNET…AFIEALHQEK (179 aa)) the chain is Mitochondrial intermembrane. Residues Cys873 and Cys891 are joined by a disulfide bond. A coiled-coil region spans residues 911 to 977 (LRQQLTNTEV…AFIEALHQEK (67 aa)).

It belongs to the TRAFAC class dynamin-like GTPase superfamily. Dynamin/Fzo/YdjA family. Oligomeric complex consisting of membrane-bound and soluble forms of OPA1. In terms of processing, cleaved by OMA1 or YME1L downstream of the transmembrane region in response to different signals to generate soluble forms. Cleaved by OMA1 at position S1 following stress conditions, generating the short soluble form (Dynamin-like GTPase OPA1, short form; S-OPA1).

Its subcellular location is the mitochondrion inner membrane. The protein localises to the mitochondrion intermembrane space. It carries out the reaction GTP + H2O = GDP + phosphate + H(+). In terms of biological role, dynamin-related GTPase that is essential for normal mitochondrial morphology by mediating fusion of the mitochondrial inner membranes, regulating cristae morphology and maintaining respiratory chain function. Exists in two forms: the transmembrane, long form (Dynamin-like GTPase OPA1, long form; L-OPA1), which is tethered to the inner mitochondrial membrane, and the short soluble form (Dynamin-like GTPase OPA1, short form; S-OPA1), which results from proteolytic cleavage and localizes in the intermembrane space. Both forms (L-OPA1 and S-OPA1) cooperate to catalyze the fusion of the mitochondrial inner membrane. The equilibrium between L-OPA1 and S-OPA1 is essential: excess levels of S-OPA1, produced by cleavage by OMA1 following loss of mitochondrial membrane potential, lead to an impaired equilibrium between L-OPA1 and S-OPA1, inhibiting mitochondrial fusion. The balance between L-OPA1 and S-OPA1 also influences cristae shape and morphology. Its role in mitochondrial morphology is required for mitochondrial genome maintenance. Its function is as follows. Constitutes the transmembrane long form (L-OPA1) that plays a central role in mitochondrial inner membrane fusion and cristae morphology. L-OPA1 and the soluble short form (S-OPA1) form higher-order helical assemblies that coordinate the fusion of mitochondrial inner membranes. Inner membrane-anchored L-OPA1 molecules initiate membrane remodeling by recruiting soluble S-OPA1 to rapidly polymerize into a flexible cylindrical scaffold encaging the mitochondrial inner membrane. Once at the membrane surface, the formation of S-OPA1 helices induce bilayer curvature. OPA1 dimerization through the paddle region, which inserts into cardiolipin-containing membrane, promotes GTP hydrolysis and the helical assembly of a flexible OPA1 lattice on the membrane, which drives membrane curvature and mitochondrial fusion. Plays a role in the maintenance and remodeling of mitochondrial cristae, some invaginations of the mitochondrial inner membrane that provide an increase in the surface area. Probably acts by forming helical filaments at the inside of inner membrane tubes with the shape and dimensions of crista junctions. Constitutes the soluble short form (S-OPA1) generated by cleavage by OMA1, which plays a central role in mitochondrial inner membrane fusion and cristae morphology. The transmembrane long form (L-OPA1) and the S-OPA1 form higher-order helical assemblies that coordinate the fusion of mitochondrial inner membranes. Inner membrane-anchored L-OPA1 molecules initiate membrane remodeling by recruiting soluble S-OPA1 to rapidly polymerize into a flexible cylindrical scaffold encaging the mitochondrial inner membrane. Once at the membrane surface, the formation of S-OPA1 helices induce bilayer curvature. OPA1 dimerization through the paddle region, which inserts into cardiolipin-containing membrane, promotes GTP hydrolysis and the helical assembly of a flexible OPA1 lattice on the membrane, which drives membrane curvature and mitochondrial fusion. Excess levels of S-OPA1 produced by cleavage by OMA1 following stress conditions that induce loss of mitochondrial membrane potential, lead to an impaired equilibrium between L-OPA1 and S-OPA1, thereby inhibiting mitochondrial fusion. Plays a role in the maintenance and remodeling of mitochondrial cristae, some invaginations of the mitochondrial inner membrane that provide an increase in the surface area. Probably acts by forming helical filaments at the inside of inner membrane tubes with the shape and dimensions of crista junctions. The chain is Dynamin-like GTPase OPA1, mitochondrial from Gallus gallus (Chicken).